Here is a 288-residue protein sequence, read N- to C-terminus: Homoserine kinase (288 aa).

79-89 (PPARGLGSSSA) serves as a coordination point for ATP.

This sequence belongs to the GHMP kinase family. Homoserine kinase subfamily.

It is found in the cytoplasm. It carries out the reaction L-homoserine + ATP = O-phospho-L-homoserine + ADP + H(+). Its pathway is amino-acid biosynthesis; L-threonine biosynthesis; L-threonine from L-aspartate: step 4/5. Catalyzes the ATP-dependent phosphorylation of L-homoserine to L-homoserine phosphate. This chain is Homoserine kinase, found in Listeria monocytogenes serotype 4b (strain CLIP80459).